A 355-amino-acid chain; its full sequence is tRNA uridine(34) hydroxylase (355 aa).

A Rhodanese domain is found at 146-240 (DDPDTVFVDM…YARQAKAQGL (95 aa)). C200 (cysteine persulfide intermediate) is an active-site residue.

This sequence belongs to the TrhO family.

The enzyme catalyses uridine(34) in tRNA + AH2 + O2 = 5-hydroxyuridine(34) in tRNA + A + H2O. Functionally, catalyzes oxygen-dependent 5-hydroxyuridine (ho5U) modification at position 34 in tRNAs. This chain is tRNA uridine(34) hydroxylase, found in Pectobacterium carotovorum subsp. carotovorum (strain PC1).